A 565-amino-acid chain; its full sequence is Sulfite reductase [NADPH] hemoprotein beta-component (565 aa).

Cysteine 429, cysteine 435, cysteine 474, and cysteine 478 together coordinate [4Fe-4S] cluster. Cysteine 478 lines the siroheme pocket.

This sequence belongs to the nitrite and sulfite reductase 4Fe-4S domain family. In terms of assembly, alpha(8)-beta(8). The alpha component is a flavoprotein, the beta component is a hemoprotein. Siroheme is required as a cofactor. The cofactor is [4Fe-4S] cluster.

It carries out the reaction hydrogen sulfide + 3 NADP(+) + 3 H2O = sulfite + 3 NADPH + 4 H(+). It functions in the pathway sulfur metabolism; hydrogen sulfide biosynthesis; hydrogen sulfide from sulfite (NADPH route): step 1/1. Component of the sulfite reductase complex that catalyzes the 6-electron reduction of sulfite to sulfide. This is one of several activities required for the biosynthesis of L-cysteine from sulfate. The sequence is that of Sulfite reductase [NADPH] hemoprotein beta-component from Shewanella sp. (strain MR-4).